The primary structure comprises 149 residues: Deoxyuridine 5'-triphosphate nucleotidohydrolase (149 aa).

Substrate-binding positions include 66–68 (RSG), Asn-79, 83–85 (TID), and Lys-93.

Belongs to the dUTPase family. Mg(2+) is required as a cofactor.

The catalysed reaction is dUTP + H2O = dUMP + diphosphate + H(+). It participates in pyrimidine metabolism; dUMP biosynthesis; dUMP from dCTP (dUTP route): step 2/2. In terms of biological role, this enzyme is involved in nucleotide metabolism: it produces dUMP, the immediate precursor of thymidine nucleotides and it decreases the intracellular concentration of dUTP so that uracil cannot be incorporated into DNA. This is Deoxyuridine 5'-triphosphate nucleotidohydrolase from Corynebacterium glutamicum (strain ATCC 13032 / DSM 20300 / JCM 1318 / BCRC 11384 / CCUG 27702 / LMG 3730 / NBRC 12168 / NCIMB 10025 / NRRL B-2784 / 534).